The sequence spans 257 residues: MSKQPSLAQLKQDLADIADLNDSRLASLAADSRKGAQLLLKQIQHRLAKAEAAEQAFQARLHYERPFWARGERVAGIDEVGRGPLAGPVVTSAVILPPDFDIPLVNDSKQLTAKERERLYPLILAQAQSVSIGIGSPALIDQINIYQATRVAMQRAVLGLGLAPQQLIVDAMQIPVDVPQIRLIKGDAKSASVAAASIVAKVYRDHLMATYDELYPGYGFAQNAGYGTAEHLQGLADRGVTPIHRRTFSPVQKILQA.

One can recognise an RNase H type-2 domain in the interval 72–257 (ERVAGIDEVG…FSPVQKILQA (186 aa)). A divalent metal cation is bound by residues Asp78, Glu79, and Asp170.

Belongs to the RNase HII family. It depends on Mn(2+) as a cofactor. Requires Mg(2+) as cofactor.

Its subcellular location is the cytoplasm. The enzyme catalyses Endonucleolytic cleavage to 5'-phosphomonoester.. Its function is as follows. Endonuclease that specifically degrades the RNA of RNA-DNA hybrids. This Levilactobacillus brevis (strain ATCC 367 / BCRC 12310 / CIP 105137 / JCM 1170 / LMG 11437 / NCIMB 947 / NCTC 947) (Lactobacillus brevis) protein is Ribonuclease HII.